The chain runs to 314 residues: Olfactory receptor 1E1 (314 aa).

Over 1-25 (MMGQNQTSISDFLLLGLPIQPEQQN) the chain is Extracellular. N-linked (GlcNAc...) asparagine glycosylation is present at N5. Residues 26–49 (LCYALFLAMYLTTLLGNLLIIVLI) traverse the membrane as a helical segment. Over 50–57 (RLDSHLHT) the chain is Cytoplasmic. A helical transmembrane segment spans residues 58-79 (PMYLFLSNLSFSDLCFSSVTIP). The Extracellular portion of the chain corresponds to 80–100 (KLLQNMQNQDPSIPYADCLTQ). A disulfide bond links C97 and C189. The helical transmembrane segment at 101 to 120 (MYFFLLFGDLESFLLVAMAY) threads the bilayer. The Cytoplasmic portion of the chain corresponds to 121-139 (DRYVAICFPLHYTAIMSPM). A helical membrane pass occupies residues 140 to 158 (LCLSVVALSWVLTTFHAML). Residues 159-195 (HTLLMARLCFCADNVIPHFFCDMSALLKLACSDTRVN) lie on the Extracellular side of the membrane. A helical membrane pass occupies residues 196–219 (EWVIFIMGGLILVIPFLLILGSYA). At 220-236 (RIVSSILKVPSSKGICK) the chain is on the cytoplasmic side. The helical transmembrane segment at 237–259 (ALSTCGSHLSVVSLFYGTVIGLY) threads the bilayer. The Extracellular portion of the chain corresponds to 260–272 (LCPSANSSTLKDT). A helical transmembrane segment spans residues 273–292 (VMAMIYTVVTPMLNPFIYSL). Topologically, residues 293 to 314 (RNRDMKGALSRVIHQKKTFFSL) are cytoplasmic.

It belongs to the G-protein coupled receptor 1 family.

The protein localises to the cell membrane. Its function is as follows. Odorant receptor. The chain is Olfactory receptor 1E1 (OR1E1) from Pan troglodytes (Chimpanzee).